The chain runs to 193 residues: V-type ATP synthase subunit E (193 aa).

This sequence belongs to the V-ATPase E subunit family.

Produces ATP from ADP in the presence of a proton gradient across the membrane. This Anaeromyxobacter sp. (strain Fw109-5) protein is V-type ATP synthase subunit E.